A 169-amino-acid polypeptide reads, in one-letter code: uncharacterized protein (169 aa).

The helical transmembrane segment at 97–117 (IVIFCILVIVAFVIWLVVWLF) threads the bilayer. The tract at residues 137-169 (NYSGLPTPQPTPTHYPAEQYSYDPARDRDNYRY) is disordered. Basic and acidic residues predominate over residues 160-169 (PARDRDNYRY).

It is found in the membrane. This is an uncharacterized protein from Caenorhabditis elegans.